Here is a 127-residue protein sequence, read N- to C-terminus: Small ribosomal subunit protein uS13 (127 aa).

Positions 93–127 (RRSLPVRGQRTHTNARTRKGPRKGTVANKKKATAK) are disordered.

Belongs to the universal ribosomal protein uS13 family. In terms of assembly, part of the 30S ribosomal subunit. Forms a loose heterodimer with protein S19. Forms two bridges to the 50S subunit in the 70S ribosome.

Functionally, located at the top of the head of the 30S subunit, it contacts several helices of the 16S rRNA. In the 70S ribosome it contacts the 23S rRNA (bridge B1a) and protein L5 of the 50S subunit (bridge B1b), connecting the 2 subunits; these bridges are implicated in subunit movement. Contacts the tRNAs in the A and P-sites. This is Small ribosomal subunit protein uS13 from Koribacter versatilis (strain Ellin345).